The chain runs to 474 residues: Trehalose-6-phosphate synthase (474 aa).

Residue Arg10 participates in D-glucose 6-phosphate binding. A UDP-alpha-D-glucose-binding site is contributed by 22–23; the sequence is GG. 2 residues coordinate D-glucose 6-phosphate: Tyr77 and Asp131. Residues Arg263 and Lys268 each contribute to the UDP-alpha-D-glucose site. Arg301 lines the D-glucose 6-phosphate pocket. Residues Phe340 and 366–370 each bind UDP-alpha-D-glucose; that span reads LVAKE.

Belongs to the glycosyltransferase 20 family. In terms of assembly, homotetramer.

The catalysed reaction is D-glucose 6-phosphate + UDP-alpha-D-glucose = alpha,alpha-trehalose 6-phosphate + UDP + H(+). It functions in the pathway glycan biosynthesis; trehalose biosynthesis. Probably involved in the osmoprotection via the biosynthesis of trehalose. Catalyzes the transfer of glucose from UDP-alpha-D-glucose (UDP-Glc) to D-glucose 6-phosphate (Glc-6-P) to form trehalose-6-phosphate. Acts with retention of the anomeric configuration of the UDP-sugar donor. The protein is Trehalose-6-phosphate synthase of Escherichia coli O1:K1 / APEC.